We begin with the raw amino-acid sequence, 932 residues long: RNA-binding protein 12 (932 aa).

The tract at residues 97–116 is disordered; sequence IPPANASRSGPPPSSGMSGR. Residues 98 to 116 are compositionally biased toward low complexity; the sequence is PPANASRSGPPPSSGMSGR. The RRM 1 domain maps to 304–379; that stretch reads LYVSVHGMPF…RYVEVSPATE (76 aa). Phosphoserine occurs at positions 352 and 375. Positions 393–424 are disordered; it reads QNMGPSGQSHPPPQTLPRSKSPSGQKRSRSRS. A compositionally biased stretch (polar residues) spans 408–417; that stretch reads LPRSKSPSGQ. Phosphoserine occurs at positions 420, 422, and 424. Residues 430–507 form the RRM 2 domain; sequence FCVYLKGLPF…RFIQVHPITK (78 aa). S525 bears the Phosphoserine mark. Residues 717-734 show a composition bias toward low complexity; sequence NGPPFNFPGNFGGSNAFG. The disordered stretch occupies residues 717 to 853; that stretch reads NGPPFNFPGN…PGFASSSGKP (137 aa). A compositionally biased stretch (gly residues) spans 783 to 811; sequence SGFGGGPQNFGNGPGSLGGPPGFGSGPPG. Residues 824-836 show a composition bias toward pro residues; that stretch reads AFGPGPGPGPGPG. The region spanning 856-932 is the RRM 3 domain; that stretch reads TVIKVQNMPF…GSRKVKLVLG (77 aa).

It localises to the nucleus. The chain is RNA-binding protein 12 (RBM12) from Macaca mulatta (Rhesus macaque).